The primary structure comprises 95 residues: Co-chaperonin GroES (95 aa).

The protein belongs to the GroES chaperonin family. Heptamer of 7 subunits arranged in a ring. Interacts with the chaperonin GroEL.

It localises to the cytoplasm. Together with the chaperonin GroEL, plays an essential role in assisting protein folding. The GroEL-GroES system forms a nano-cage that allows encapsulation of the non-native substrate proteins and provides a physical environment optimized to promote and accelerate protein folding. GroES binds to the apical surface of the GroEL ring, thereby capping the opening of the GroEL channel. The polypeptide is Co-chaperonin GroES (Bordetella avium (strain 197N)).